Consider the following 275-residue polypeptide: MANYTAADVKKLREITGAGMMSCKKALEEADGDFDKAVEFLRIKGAKDVGKRAERTAAEGLIAVSGNTMIEVNSETDFVAKNAEFKEFADKVAKAADEAKANSAEDLAAVNVDGTPAEEALQAFSAKIGEKLALRRATTIDGDNVAVYLHHRSADLPPAVGVMVAYEGEGDAAKEAAHNAAMQVAALKAKYLKREDVPSDIVEKERSIAEATSREEGKPEKALPKIVEGRLNGFFKDVVLLEQPSVADHKKTVKQLMDEAGVTLTGFRRYEVGQQ.

An involved in Mg(2+) ion dislocation from EF-Tu region spans residues Thr-76 to Val-79.

This sequence belongs to the EF-Ts family.

It localises to the cytoplasm. In terms of biological role, associates with the EF-Tu.GDP complex and induces the exchange of GDP to GTP. It remains bound to the aminoacyl-tRNA.EF-Tu.GTP complex up to the GTP hydrolysis stage on the ribosome. The protein is Elongation factor Ts of Corynebacterium kroppenstedtii (strain DSM 44385 / JCM 11950 / CIP 105744 / CCUG 35717).